The primary structure comprises 72 residues: MPKEEVLEFPGIVTELLPNATFRVKLENEHEIIAHTAGRMRKNRIRVLAGDKVLVEMTPYDLTKGRITYRFK.

Residues 1–72 (MPKEEVLEFP…TKGRITYRFK (72 aa)) enclose the S1-like domain.

This sequence belongs to the IF-1 family. As to quaternary structure, component of the 30S ribosomal translation pre-initiation complex which assembles on the 30S ribosome in the order IF-2 and IF-3, IF-1 and N-formylmethionyl-tRNA(fMet); mRNA recruitment can occur at any time during PIC assembly.

The protein localises to the cytoplasm. One of the essential components for the initiation of protein synthesis. Stabilizes the binding of IF-2 and IF-3 on the 30S subunit to which N-formylmethionyl-tRNA(fMet) subsequently binds. Helps modulate mRNA selection, yielding the 30S pre-initiation complex (PIC). Upon addition of the 50S ribosomal subunit IF-1, IF-2 and IF-3 are released leaving the mature 70S translation initiation complex. The sequence is that of Translation initiation factor IF-1 from Rhizobium etli (strain ATCC 51251 / DSM 11541 / JCM 21823 / NBRC 15573 / CFN 42).